Consider the following 161-residue polypeptide: Probable calcium-binding protein CML16 (161 aa).

EF-hand domains lie at 8-43, 44-79, 83-118, and 119-154; these read DQIK…LGIK, PRGD…DINE, INQE…MGHP, and LTYR…SAAD. Residues Asp21, Asp23, Asp25, Ser27, Glu32, Asp57, Asn59, Asn61, Ser63, Glu68, Asp96, Asp98, Asn100, Ser102, Glu107, Asp132, Asn134, Asp136, and Glu143 each coordinate Ca(2+).

In terms of biological role, potential calcium sensor. The protein is Probable calcium-binding protein CML16 (CML16) of Arabidopsis thaliana (Mouse-ear cress).